The primary structure comprises 379 residues: Tryptophan 2,3-dioxygenase (379 aa).

Substrate contacts are provided by residues 57–61 (FIITH) and Arg-128. Heme is bound at residue His-312. Thr-327 is a substrate binding site.

It belongs to the tryptophan 2,3-dioxygenase family. In terms of assembly, homotetramer. Dimer of dimers. Requires heme as cofactor.

The enzyme catalyses L-tryptophan + O2 = N-formyl-L-kynurenine. It functions in the pathway amino-acid degradation; L-tryptophan degradation via kynurenine pathway; L-kynurenine from L-tryptophan: step 1/2. The protein operates within pigment biosynthesis; ommochrome biosynthesis. Heme-dependent dioxygenase that catalyzes the oxidative cleavage of the L-tryptophan (L-Trp) pyrrole ring and converts L-tryptophan to N-formyl-L-kynurenine. Catalyzes the oxidative cleavage of the indole moiety. In Drosophila yakuba (Fruit fly), this protein is Tryptophan 2,3-dioxygenase.